Reading from the N-terminus, the 140-residue chain is ATP synthase epsilon chain 1 (140 aa).

It belongs to the ATPase epsilon chain family. As to quaternary structure, F-type ATPases have 2 components, CF(1) - the catalytic core - and CF(0) - the membrane proton channel. CF(1) has five subunits: alpha(3), beta(3), gamma(1), delta(1), epsilon(1). CF(0) has three main subunits: a, b and c.

It is found in the cell inner membrane. Produces ATP from ADP in the presence of a proton gradient across the membrane. The polypeptide is ATP synthase epsilon chain 1 (Methylococcus capsulatus (strain ATCC 33009 / NCIMB 11132 / Bath)).